An 81-amino-acid chain; its full sequence is Putative membrane protein insertion efficiency factor (81 aa).

Belongs to the UPF0161 family.

The protein resides in the cell inner membrane. Its function is as follows. Could be involved in insertion of integral membrane proteins into the membrane. The protein is Putative membrane protein insertion efficiency factor of Pseudomonas savastanoi pv. phaseolicola (strain 1448A / Race 6) (Pseudomonas syringae pv. phaseolicola (strain 1448A / Race 6)).